A 313-amino-acid chain; its full sequence is L-lactate dehydrogenase 1 (313 aa).

4 residues coordinate NAD(+): V15, D36, R41, and Y66. Substrate-binding positions include Q83, R89, and 121–124 (NPVD). Residues 119–121 (ASN) and S144 each bind NAD(+). 149-152 (DTAR) is a substrate binding site. R154 and H169 together coordinate beta-D-fructose 1,6-bisphosphate. The active-site Proton acceptor is the H176. Phosphotyrosine is present on Y218. T227 is a binding site for substrate.

The protein belongs to the LDH/MDH superfamily. LDH family. In terms of assembly, homotetramer.

Its subcellular location is the cytoplasm. It carries out the reaction (S)-lactate + NAD(+) = pyruvate + NADH + H(+). It participates in fermentation; pyruvate fermentation to lactate; (S)-lactate from pyruvate: step 1/1. With respect to regulation, allosterically activated by fructose 1,6-bisphosphate (FBP). Functionally, catalyzes the conversion of lactate to pyruvate. The protein is L-lactate dehydrogenase 1 of Listeria innocua serovar 6a (strain ATCC BAA-680 / CLIP 11262).